The sequence spans 374 residues: Homeobox protein knotted-1-like 13 (374 aa).

A disordered region spans residues 214-242 (TGASPGEGTGATMSDGEDDQADSEANMYD). The ELK domain maps to 270-290 (ELKHELKQGYKEKLIDIREEI). A DNA-binding region (homeobox; TALE-type) is located at residues 291–354 (LRKRRAGKLP…NQRKRNWHSN (64 aa)). Positions 347 to 374 (RKRNWHSNPSSSTSVKTKRKSNAGDNNS) are disordered.

This sequence belongs to the TALE/KNOX homeobox family. In terms of tissue distribution, isoforms 1 and 2 are expressed in roots, stems, shoot meristem, leaf blades, leaf sheaths and flowers. Isoform 3 is expressed in stems, shoot meristem, rachis, leaf blades and leaf sheaths.

It localises to the nucleus. Isoform 3 acts as a transcription activator, but isoforms 1 and 2 do not. The chain is Homeobox protein knotted-1-like 13 (OSH45) from Oryza sativa subsp. japonica (Rice).